We begin with the raw amino-acid sequence, 102 residues long: Parathymosin (102 aa).

Residues 1–102 (MSEKSVEAAA…RQKTENGASA (102 aa)) form a disordered region. N-acetylserine is present on serine 2. Serine 2 is subject to Phosphoserine. The residue at position 4 (lysine 4) is an N6-acetyllysine. 2 positions are modified to phosphoserine: serine 5 and serine 13. Residues 13-37 (SAKDLKEKKDKVEEKAGRKERKKEV) are compositionally biased toward basic and acidic residues. The residue at position 15 (lysine 15) is an N6-acetyllysine. Residues 38-75 (VEEEENGAEEEEEETAEDGEDDDEGDEEDEEEEEEEDE) are compositionally biased toward acidic residues. Threonine 52 is modified (phosphothreonine). N6-acetyllysine is present on lysine 92.

Belongs to the pro/parathymosin family.

Functionally, parathymosin may mediate immune function by blocking the effect of prothymosin alpha which confers resistance to certain opportunistic infections. The sequence is that of Parathymosin (Ptms) from Rattus norvegicus (Rat).